Reading from the N-terminus, the 345-residue chain is Biotin synthase (345 aa).

Residues 38-256 form the Radical SAM core domain; it reads QQVQVSTLLS…IAVARIMMPS (219 aa). The [4Fe-4S] cluster site is built by C53, C57, and C60. 4 residues coordinate [2Fe-2S] cluster: C97, C128, C188, and R260.

The protein belongs to the radical SAM superfamily. Biotin synthase family. In terms of assembly, homodimer. It depends on [4Fe-4S] cluster as a cofactor. Requires [2Fe-2S] cluster as cofactor.

It carries out the reaction (4R,5S)-dethiobiotin + (sulfur carrier)-SH + 2 reduced [2Fe-2S]-[ferredoxin] + 2 S-adenosyl-L-methionine = (sulfur carrier)-H + biotin + 2 5'-deoxyadenosine + 2 L-methionine + 2 oxidized [2Fe-2S]-[ferredoxin]. The protein operates within cofactor biosynthesis; biotin biosynthesis; biotin from 7,8-diaminononanoate: step 2/2. In terms of biological role, catalyzes the conversion of dethiobiotin (DTB) to biotin by the insertion of a sulfur atom into dethiobiotin via a radical-based mechanism. The chain is Biotin synthase from Photorhabdus laumondii subsp. laumondii (strain DSM 15139 / CIP 105565 / TT01) (Photorhabdus luminescens subsp. laumondii).